A 513-amino-acid polypeptide reads, in one-letter code: Putative GMP synthase [glutamine-hydrolyzing] (513 aa).

A Glutamine amidotransferase type-1 domain is found at 8–198 (MIVVLDFGGQ…AFAVCGCEGN (191 aa)). The active-site Nucleophile is the Cys-85. Residue Glu-174 is part of the active site. The 190-residue stretch at 199–388 (WSMENFIELE…LGIPDEVVWR (190 aa)) folds into the GMPS ATP-PPase domain. 226–232 (SGGVDSS) contacts ATP.

In terms of assembly, homodimer.

It carries out the reaction XMP + L-glutamine + ATP + H2O = GMP + L-glutamate + AMP + diphosphate + 2 H(+). It functions in the pathway purine metabolism; GMP biosynthesis; GMP from XMP (L-Gln route): step 1/1. In terms of biological role, catalyzes the synthesis of GMP from XMP. This is Putative GMP synthase [glutamine-hydrolyzing] (guaA) from Halalkalibacterium halodurans (strain ATCC BAA-125 / DSM 18197 / FERM 7344 / JCM 9153 / C-125) (Bacillus halodurans).